A 532-amino-acid polypeptide reads, in one-letter code: Fe-S cluster assembly factor HCF101, chloroplastic (532 aa).

The transit peptide at 1–61 (MPLLHPQSLR…RVSQNLSVAK (61 aa)) directs the protein to the chloroplast. Residue alanine 62 is modified to N-acetylalanine. 184–191 (CKGGVGKS) is a binding site for ATP.

Belongs to the Mrp/NBP35 ATP-binding proteins family. Requires [4Fe-4S] cluster as cofactor. In terms of tissue distribution, expressed in aerial tissues exposed to light. Very low expression in roots.

It is found in the plastid. The protein localises to the chloroplast stroma. In terms of biological role, required for photosystem I (PSI) biosynthesis and assembly. May serve as a chloroplast scaffold protein that specifically assembles iron-sulfur (4Fe-4S) clusters and transfers them to the chloroplast PSI and ferredoxin-thioredoxin (FTR) complexes. Can assemble a 4Fe-4S cluster and transfer it to apoproteins in yeast cells. Probably not required for assembly or stability of plastidic 2Fe-2S clusters. The sequence is that of Fe-S cluster assembly factor HCF101, chloroplastic (HCF101) from Arabidopsis thaliana (Mouse-ear cress).